The sequence spans 214 residues: Probable nicotinate-nucleotide adenylyltransferase (214 aa).

The protein belongs to the NadD family.

The enzyme catalyses nicotinate beta-D-ribonucleotide + ATP + H(+) = deamido-NAD(+) + diphosphate. It functions in the pathway cofactor biosynthesis; NAD(+) biosynthesis; deamido-NAD(+) from nicotinate D-ribonucleotide: step 1/1. Catalyzes the reversible adenylation of nicotinate mononucleotide (NaMN) to nicotinic acid adenine dinucleotide (NaAD). This is Probable nicotinate-nucleotide adenylyltransferase from Mycobacterium bovis (strain ATCC BAA-935 / AF2122/97).